A 129-amino-acid polypeptide reads, in one-letter code: Snaclec rhodocetin subunit beta (129 aa).

Positions 3 to 125 (RCPTTWSASK…EEKNAFLCKF (123 aa)) constitute a C-type lectin domain. 3 cysteine pairs are disulfide-bonded: C4–C15, C32–C123, and C98–C115.

As to quaternary structure, heterotetramer of subunit alpha, beta, gamma and delta; only the gamma and the delta subunits are disulfide-linked. Alpha-beta heterodimer and gamma-delta heterodimer associate orthogonally, giving a cruciform conformation. This heterotetramer may covalently dimerizes thanks to the gamma subunit. Expressed by the venom gland.

It is found in the secreted. In terms of biological role, potent inhibitor of collagen-induced platelet aggregation. It acts by binding to the integrin alpha2A domain and blocks collagen binding to integrin alpha-2/beta-1 (ITGA2/ITGB1). The gamma/delta subunits mainly contribute to this activity. In Calloselasma rhodostoma (Malayan pit viper), this protein is Snaclec rhodocetin subunit beta.